Here is a 466-residue protein sequence, read N- to C-terminus: Histidine--tRNA ligase (466 aa).

This sequence belongs to the class-II aminoacyl-tRNA synthetase family. As to quaternary structure, homodimer.

Its subcellular location is the cytoplasm. It catalyses the reaction tRNA(His) + L-histidine + ATP = L-histidyl-tRNA(His) + AMP + diphosphate + H(+). In Xylella fastidiosa (strain M12), this protein is Histidine--tRNA ligase.